Reading from the N-terminus, the 1020-residue chain is Phosphatidylinositol 3-kinase VPS34 (1020 aa).

The 162-residue stretch at 49–210 (LSTKFEDPTV…NWLDKMVLPK (162 aa)) folds into the C2 PI3K-type domain. Residues 331–577 (DKELKPTPQL…DGPIKIYMDI (247 aa)) form the PIK helical domain. Residues 666-1004 (YPEESSVFKS…LINDSVNAFL (339 aa)) enclose the PI3K/PI4K catalytic domain. Positions 672-678 (VFKSSLA) are G-loop. A catalytic loop region spans residues 873 to 881 (GVGDRHLDN). Residues 892 to 913 (HADFGYILGRDPKPFPPLMKLP) form an activation loop region.

This sequence belongs to the PI3/PI4-kinase family. Component of the autophagy-specific VPS34 PI3-kinase complex I composed of at least VPS15, VPS30, VPS34, and of the VPS34 PI3-kinase complex II composed of VPS15, VPS30, VPS34 and VPS38. Interacts with VMNA7. Post-translationally, autophosphorylated.

The protein resides in the golgi apparatus. It localises to the trans-Golgi network membrane. It is found in the endosome membrane. The enzyme catalyses a 1,2-diacyl-sn-glycero-3-phospho-(1D-myo-inositol) + ATP = a 1,2-diacyl-sn-glycero-3-phospho-(1D-myo-inositol-3-phosphate) + ADP + H(+). In terms of biological role, multifunctional phosphatidylinositol 3-kinase involved in acidification of vacuoles, pH-dependent cell growth, and autophagocytosis. Plays an important role in protein transport and virulence. Component of the autophagy-specific VPS34 PI3-kinase complex I essential to recruit the ATG8-phosphatidylinositol conjugate and the ATG12-ATG5 conjugate to the pre-autophagosomal structure. Also involved in endosome-to-Golgi retrograde transport as part of the VPS34 PI3-kinase complex II. This second complex is required for the endosome-to-Golgi retrieval of PEP1 and KEX2, and the recruitment of VPS5 and VPS7, two components of the retromer complex, to endosomal membranes (probably through the synthesis of a specific pool of phosphatidylinositol 3-phosphate recruiting the retromer to the endosomes). Finally, it might also be involved in ethanol tolerance and cell wall integrity. The chain is Phosphatidylinositol 3-kinase VPS34 from Candida albicans (Yeast).